The sequence spans 93 residues: MPRSLKKGPFIDDHLIKKVELAVSNSDRRVIKTWSRRSTIAPEMVGLTFAVHNGKKFIPVFVTENMVGHKLGEFAPTRTFYGHAADKKSKAKK.

Belongs to the universal ribosomal protein uS19 family.

In terms of biological role, protein S19 forms a complex with S13 that binds strongly to the 16S ribosomal RNA. In Nitratidesulfovibrio vulgaris (strain DSM 19637 / Miyazaki F) (Desulfovibrio vulgaris), this protein is Small ribosomal subunit protein uS19.